A 209-amino-acid polypeptide reads, in one-letter code: Octanoyltransferase (209 aa).

Residues 29–209 form the BPL/LPL catalytic domain; the sequence is GSGDELVWML…KKSFVKIFGE (181 aa). Residues 68 to 75, 141 to 143, and 154 to 156 each bind substrate; these read RGGKYTYH, AIG, and GIA. The active-site Acyl-thioester intermediate is the Cys172.

The protein belongs to the LipB family.

Its subcellular location is the cytoplasm. It carries out the reaction octanoyl-[ACP] + L-lysyl-[protein] = N(6)-octanoyl-L-lysyl-[protein] + holo-[ACP] + H(+). It participates in protein modification; protein lipoylation via endogenous pathway; protein N(6)-(lipoyl)lysine from octanoyl-[acyl-carrier-protein]: step 1/2. Functionally, catalyzes the transfer of endogenously produced octanoic acid from octanoyl-acyl-carrier-protein onto the lipoyl domains of lipoate-dependent enzymes. Lipoyl-ACP can also act as a substrate although octanoyl-ACP is likely to be the physiological substrate. The polypeptide is Octanoyltransferase (Neorickettsia sennetsu (strain ATCC VR-367 / Miyayama) (Ehrlichia sennetsu)).